Reading from the N-terminus, the 207-residue chain is MLTIAMPKGRIFEEAVELLRRADYALPPEFTESRKLVIDVPEENMRFILAKPMDVVTYVEHGVADLGIAGKDVLMEEERDVYELLDLHISRCHLAVAGMPGAKMNEIAPRVATKYPNIASTYFREQGEQVEIIRLNGSIELAPLIGLADRIVDIVSTGRTLRENGLVELERIAEVTSRLIVNPASYRLNGGDIERLVDRLAAVIPQP.

Belongs to the ATP phosphoribosyltransferase family. Short subfamily. As to quaternary structure, heteromultimer composed of HisG and HisZ subunits.

Its subcellular location is the cytoplasm. The enzyme catalyses 1-(5-phospho-beta-D-ribosyl)-ATP + diphosphate = 5-phospho-alpha-D-ribose 1-diphosphate + ATP. It participates in amino-acid biosynthesis; L-histidine biosynthesis; L-histidine from 5-phospho-alpha-D-ribose 1-diphosphate: step 1/9. In terms of biological role, catalyzes the condensation of ATP and 5-phosphoribose 1-diphosphate to form N'-(5'-phosphoribosyl)-ATP (PR-ATP). Has a crucial role in the pathway because the rate of histidine biosynthesis seems to be controlled primarily by regulation of HisG enzymatic activity. The protein is ATP phosphoribosyltransferase of Geobacillus kaustophilus (strain HTA426).